Consider the following 601-residue polypeptide: Peptide transporter PTR2 (601 aa).

Positions M1–D10 are enriched in polar residues. Positions M1–E66 are disordered. Over M1–T150 the chain is Extracellular. Basic and acidic residues predominate over residues D14–T28. Y37 carries the post-translational modification Phosphotyrosine. Residues S39 and S45 each carry the phosphoserine modification. Residues V42–P53 show a composition bias toward polar residues. A compositionally biased stretch (acidic residues) spans P55–E66. The helical transmembrane segment at F151–L172 threads the bilayer. Residues F173–N182 lie on the Cytoplasmic side of the membrane. A helical membrane pass occupies residues R183–G202. Topologically, residues M203–V210 are extracellular. A helical membrane pass occupies residues L211–G229. Residues E230–H267 lie on the Cytoplasmic side of the membrane. The chain crosses the membrane as a helical span at residues K268–T287. Over L288–Q294 the chain is Extracellular. A helical transmembrane segment spans residues Y295–T316. The Cytoplasmic portion of the chain corresponds to K317–M378. The helical transmembrane segment at M379–I399 threads the bilayer. The Extracellular portion of the chain corresponds to F400–I412. The helical transmembrane segment at R413–M429 threads the bilayer. At F430–A448 the chain is on the cytoplasmic side. A helical membrane pass occupies residues G449 to V466. Over C467–K494 the chain is Extracellular. The helical transmembrane segment at A495 to F513 threads the bilayer. The Cytoplasmic portion of the chain corresponds to G514 to V526. The chain crosses the membrane as a helical span at residues D527 to L547. Residues F548–K554 are Extracellular-facing. A helical membrane pass occupies residues Y555 to P577. Over I578–Y601 the chain is Cytoplasmic. Position 594 is a phosphoserine (S594).

This sequence belongs to the major facilitator superfamily. Proton-dependent oligopeptide transporter (POT/PTR) (TC 2.A.17) family.

The protein localises to the membrane. Its function is as follows. Uptake of small peptides. This chain is Peptide transporter PTR2 (PTR2), found in Saccharomyces cerevisiae (strain ATCC 204508 / S288c) (Baker's yeast).